A 321-amino-acid polypeptide reads, in one-letter code: MNTVGTPLLWGGFAVVVAIMLAIDLLLQGRRGAHAMTMKQAAAWSLVWVTLSLLFNAAFWWYLVQTEGRAVADPQALAFLTGYLIEKSLAVDNVFVWLMLFSYFSVPAALQRRVLVYGVLGAIVLRTIMIFTGSWLISQFDWILYIFGAFLLFTGVKMALAHEDESGIGDKPLVRWLRGHLRMTDTIDNEHFFVRKNGLLYATPLMLVLILVELSDVIFAVDSIPAIFAVTTDPFIVLTSNLFAILGLRAMYFLLAGVAERFSMLKYGLAVILVFIGIKMLIVDFYHIPIAVSLGVVFGILVMTFIINAWVNYRHDKQRVG.

The Periplasmic portion of the chain corresponds to 1–6 (MNTVGT). Residues 7–27 (PLLWGGFAVVVAIMLAIDLLL) traverse the membrane as a helical segment. Residues 28–43 (QGRRGAHAMTMKQAAA) are Cytoplasmic-facing. The helical transmembrane segment at 44 to 64 (WSLVWVTLSLLFNAAFWWYLV) threads the bilayer. The Periplasmic segment spans residues 65-89 (QTEGRAVADPQALAFLTGYLIEKSL). The helical transmembrane segment at 90-110 (AVDNVFVWLMLFSYFSVPAAL) threads the bilayer. Topologically, residues 111-113 (QRR) are cytoplasmic. Residues 114–134 (VLVYGVLGAIVLRTIMIFTGS) traverse the membrane as a helical segment. Residue Trp-135 is a topological domain, periplasmic. Residues 136–156 (LISQFDWILYIFGAFLLFTGV) traverse the membrane as a helical segment. Residues 157–198 (KMALAHEDESGIGDKPLVRWLRGHLRMTDTIDNEHFFVRKNG) are Cytoplasmic-facing. The chain crosses the membrane as a helical span at residues 199–219 (LLYATPLMLVLILVELSDVIF). Topologically, residues 220 to 225 (AVDSIP) are periplasmic. A helical transmembrane segment spans residues 226–246 (AIFAVTTDPFIVLTSNLFAIL). Over 247–261 (GLRAMYFLLAGVAER) the chain is Cytoplasmic. Residues 262–282 (FSMLKYGLAVILVFIGIKMLI) form a helical membrane-spanning segment. Residues 283–286 (VDFY) are Periplasmic-facing. A helical membrane pass occupies residues 287-307 (HIPIAVSLGVVFGILVMTFII). Over 308–321 (NAWVNYRHDKQRVG) the chain is Cytoplasmic.

The protein belongs to the TerC family.

Its subcellular location is the cell inner membrane. In terms of biological role, has been proposed to be a redox modulator. The polypeptide is Putative membrane-bound redox modulator Alx (alx) (Escherichia coli O157:H7).